A 426-amino-acid polypeptide reads, in one-letter code: Enolase (426 aa).

Q163 provides a ligand contact to (2R)-2-phosphoglycerate. E205 acts as the Proton donor in catalysis. Residues D242, E283, and D310 each coordinate Mg(2+). (2R)-2-phosphoglycerate contacts are provided by K335, R364, S365, and K386. The Proton acceptor role is filled by K335.

Belongs to the enolase family. Mg(2+) serves as cofactor.

It is found in the cytoplasm. It localises to the secreted. The protein localises to the cell surface. The catalysed reaction is (2R)-2-phosphoglycerate = phosphoenolpyruvate + H2O. Its pathway is carbohydrate degradation; glycolysis; pyruvate from D-glyceraldehyde 3-phosphate: step 4/5. Catalyzes the reversible conversion of 2-phosphoglycerate (2-PG) into phosphoenolpyruvate (PEP). It is essential for the degradation of carbohydrates via glycolysis. This is Enolase from Pseudarthrobacter chlorophenolicus (strain ATCC 700700 / DSM 12829 / CIP 107037 / JCM 12360 / KCTC 9906 / NCIMB 13794 / A6) (Arthrobacter chlorophenolicus).